The following is a 55-amino-acid chain: Protein CADMIUM TOLERANCE 1 (55 aa).

Residues 24–40 form a helical membrane-spanning segment; sequence GCLYACIFTALCCFCCY.

It belongs to the CYSTM1 family.

The protein resides in the cell membrane. Its subcellular location is the secreted. The protein localises to the cell wall. Its function is as follows. Confers resistance to heavy metal ions (e.g. cadmium (CdCl(2)) and copper (CuCl(2))) by chelating them at the plasma membrane of root cells, thus stopping their entry and reducing their accumulation. This Digitaria ciliaris (Southern crabgrass) protein is Protein CADMIUM TOLERANCE 1.